Consider the following 260-residue polypeptide: Archaerhodopsin-1 (260 aa).

Residues 1–6 constitute a propeptide that is removed on maturation; that stretch reads MDPIAL. Residues 7–20 are Extracellular-facing; sequence TAAVGADLLGDGRP. Residues 21-42 form a helical membrane-spanning segment; sequence ETLWLGIGTLLMLIGTFYFIVK. At 43–51 the chain is on the cytoplasmic side; that stretch reads GWGVTDKEA. A helical transmembrane segment spans residues 52–73; it reads REYYSITILVPGIASAAYLSMF. The Extracellular segment spans residues 74 to 91; sequence FGIGLTEVQVGSEMLDIY. A helical transmembrane segment spans residues 92–113; sequence YARYADWLFTTPLLLLDLALLA. The Cytoplasmic portion of the chain corresponds to 114-116; it reads KVD. A helical membrane pass occupies residues 117 to 139; sequence RVSIGTLVGVDALMIVTGLVGAL. Residues 140–143 lie on the Extracellular side of the membrane; it reads SHTP. The chain crosses the membrane as a helical span at residues 144–172; it reads LARYTWWLFSTICMIVVLYFLATSLRAAA. At 173 to 176 the chain is on the cytoplasmic side; that stretch reads KERG. The chain crosses the membrane as a helical span at residues 177–204; sequence PEVASTFNTLTALVLVLWTAYPILWIIG. The Extracellular portion of the chain corresponds to 205–212; sequence TEGAGVVG. A helical transmembrane segment spans residues 213 to 245; that stretch reads LGIETLLFMVLDVTAKVGFGFILLRSRAILGDT. K228 is subject to N6-(retinylidene)lysine. Residues 246–260 are Cytoplasmic-facing; it reads EAPEPSAGAEASAAD.

It belongs to the archaeal/bacterial/fungal opsin family.

Its subcellular location is the cell membrane. Its function is as follows. Light-driven proton pump. It may interact with bacterioruberin in the claret membrane. This chain is Archaerhodopsin-1, found in Halorubrum ezzemoulense (Halorubrum chaoviator).